The sequence spans 596 residues: Elongation factor 4 (596 aa).

Residues 2–184 (KHIRNFSIIA…VIVDQIPPPE (183 aa)) enclose the tr-type G domain. GTP is bound by residues 14 to 19 (DHGKST) and 131 to 134 (NKID).

Belongs to the TRAFAC class translation factor GTPase superfamily. Classic translation factor GTPase family. LepA subfamily.

The protein resides in the cell inner membrane. The catalysed reaction is GTP + H2O = GDP + phosphate + H(+). In terms of biological role, required for accurate and efficient protein synthesis under certain stress conditions. May act as a fidelity factor of the translation reaction, by catalyzing a one-codon backward translocation of tRNAs on improperly translocated ribosomes. Back-translocation proceeds from a post-translocation (POST) complex to a pre-translocation (PRE) complex, thus giving elongation factor G a second chance to translocate the tRNAs correctly. Binds to ribosomes in a GTP-dependent manner. The chain is Elongation factor 4 from Shewanella sp. (strain ANA-3).